A 293-amino-acid polypeptide reads, in one-letter code: MSIRTPMKLGIPKGSLEEATINLLARSGWKIRKHHRNYFPEINDPELTARLCRVQEIPRYIEDGILDVGLTGKDWLLETGSDVVVVSDLVYSKVSNRPARWVLAVAGDSPYTRPEDLAGKRIATELLGVTKRYFADAGIEVNVQYSWGATEAKVVEGLADAIVEVTETGTTIKAHGLRIISEVLLTNTVLIANRAAWEDPCRRRKIEQIDLLLQGALRADSLVGLKMNVPTRCLDAVLDQLPSLNSPTVAGLRDNTWFAVEIVVDNGVVRDLIPRLREAGAEGIIEYALNKVI.

It belongs to the ATP phosphoribosyltransferase family. Long subfamily. Requires Mg(2+) as cofactor.

It localises to the cytoplasm. It carries out the reaction 1-(5-phospho-beta-D-ribosyl)-ATP + diphosphate = 5-phospho-alpha-D-ribose 1-diphosphate + ATP. Its pathway is amino-acid biosynthesis; L-histidine biosynthesis; L-histidine from 5-phospho-alpha-D-ribose 1-diphosphate: step 1/9. Feedback inhibited by histidine. Its function is as follows. Catalyzes the condensation of ATP and 5-phosphoribose 1-diphosphate to form N'-(5'-phosphoribosyl)-ATP (PR-ATP). Has a crucial role in the pathway because the rate of histidine biosynthesis seems to be controlled primarily by regulation of HisG enzymatic activity. This chain is ATP phosphoribosyltransferase, found in Nitratidesulfovibrio vulgaris (strain ATCC 29579 / DSM 644 / CCUG 34227 / NCIMB 8303 / VKM B-1760 / Hildenborough) (Desulfovibrio vulgaris).